The sequence spans 139 residues: Small ribosomal subunit protein uS12 (139 aa).

This sequence belongs to the universal ribosomal protein uS12 family. Part of the 30S ribosomal subunit. Contacts proteins S8 and S17. May interact with IF1 in the 30S initiation complex.

Its function is as follows. With S4 and S5 plays an important role in translational accuracy. In terms of biological role, interacts with and stabilizes bases of the 16S rRNA that are involved in tRNA selection in the A site and with the mRNA backbone. Located at the interface of the 30S and 50S subunits, it traverses the body of the 30S subunit contacting proteins on the other side and probably holding the rRNA structure together. The combined cluster of proteins S8, S12 and S17 appears to hold together the shoulder and platform of the 30S subunit. The polypeptide is Small ribosomal subunit protein uS12 (Mycoplasma pneumoniae (strain ATCC 29342 / M129 / Subtype 1) (Mycoplasmoides pneumoniae)).